Here is a 115-residue protein sequence, read N- to C-terminus: Ribonuclease P protein component (115 aa).

The protein belongs to the RnpA family. In terms of assembly, consists of a catalytic RNA component (M1 or rnpB) and a protein subunit.

It carries out the reaction Endonucleolytic cleavage of RNA, removing 5'-extranucleotides from tRNA precursor.. In terms of biological role, RNaseP catalyzes the removal of the 5'-leader sequence from pre-tRNA to produce the mature 5'-terminus. It can also cleave other RNA substrates such as 4.5S RNA. The protein component plays an auxiliary but essential role in vivo by binding to the 5'-leader sequence and broadening the substrate specificity of the ribozyme. The polypeptide is Ribonuclease P protein component (Staphylococcus epidermidis (strain ATCC 35984 / DSM 28319 / BCRC 17069 / CCUG 31568 / BM 3577 / RP62A)).